The primary structure comprises 351 residues: Uroporphyrinogen decarboxylase (351 aa).

Substrate is bound by residues arginine 26–arginine 30, aspartate 75, tyrosine 151, serine 206, and histidine 321.

This sequence belongs to the uroporphyrinogen decarboxylase family. As to quaternary structure, homodimer.

It is found in the cytoplasm. The catalysed reaction is uroporphyrinogen III + 4 H(+) = coproporphyrinogen III + 4 CO2. Its pathway is porphyrin-containing compound metabolism; protoporphyrin-IX biosynthesis; coproporphyrinogen-III from 5-aminolevulinate: step 4/4. In terms of biological role, catalyzes the decarboxylation of four acetate groups of uroporphyrinogen-III to yield coproporphyrinogen-III. The chain is Uroporphyrinogen decarboxylase from Koribacter versatilis (strain Ellin345).